Here is a 74-residue protein sequence, read N- to C-terminus: Conotoxin Cal27 (74 aa).

A signal peptide spans 1–19 (MSGTGVLLLTLLLLVAMAA).

Post-translationally, may contain 4 disulfide bonds. Expressed by the venom duct.

The protein resides in the secreted. Its function is as follows. Probable neurotoxin. The chain is Conotoxin Cal27 from Californiconus californicus (California cone).